Consider the following 1400-residue polypeptide: DNA-directed RNA polymerase subunit beta' (1400 aa).

Zn(2+) contacts are provided by Cys-71, Cys-73, Cys-86, and Cys-89. 3 residues coordinate Mg(2+): Asp-462, Asp-464, and Asp-466. Residues Cys-811, Cys-885, Cys-892, and Cys-895 each contribute to the Zn(2+) site.

Belongs to the RNA polymerase beta' chain family. In terms of assembly, the RNAP catalytic core consists of 2 alpha, 1 beta, 1 beta' and 1 omega subunit. When a sigma factor is associated with the core the holoenzyme is formed, which can initiate transcription. Mg(2+) is required as a cofactor. Zn(2+) serves as cofactor.

It carries out the reaction RNA(n) + a ribonucleoside 5'-triphosphate = RNA(n+1) + diphosphate. Functionally, DNA-dependent RNA polymerase catalyzes the transcription of DNA into RNA using the four ribonucleoside triphosphates as substrates. The chain is DNA-directed RNA polymerase subunit beta' from Brucella suis (strain ATCC 23445 / NCTC 10510).